Here is a 513-residue protein sequence, read N- to C-terminus: GMP synthase [glutamine-hydrolyzing] (513 aa).

A Glutamine amidotransferase type-1 domain is found at 5-195 (LVLVIDFGGQ…VYNICGCTGD (191 aa)). Cys-82 acts as the Nucleophile in catalysis. Residues His-169 and Glu-171 contribute to the active site. A GMPS ATP-PPase domain is found at 196 to 388 (WKMDSFVEKT…LGIPEKLVFR (193 aa)). Residue 223-229 (SGGVDSS) coordinates ATP.

Homodimer.

The catalysed reaction is XMP + L-glutamine + ATP + H2O = GMP + L-glutamate + AMP + diphosphate + 2 H(+). Its pathway is purine metabolism; GMP biosynthesis; GMP from XMP (L-Gln route): step 1/1. Functionally, catalyzes the synthesis of GMP from XMP. The chain is GMP synthase [glutamine-hydrolyzing] from Clostridium botulinum (strain Eklund 17B / Type B).